A 225-amino-acid polypeptide reads, in one-letter code: MSPFQNFMILEEKQLLILMKTNSEICKELVSNPEKFNKLEQFVSLVEEWNKKINLTGFEGENLWKEGINESFFCFEKILETKNLNDFENKSWVDIGSGAGFPIIPFAIIYPKINFYIIESNSKRVRFLELVNEKLNLKIKIFNTRAENFSELKFDFVSARAVAHLDLLIKYFMKITKQDATGYFIKGPKIFEEKEEINNKKISIETLKIDKIKEKNVFVVKMNRI.

S-adenosyl-L-methionine-binding positions include glycine 96, phenylalanine 101, 146 to 147 (AE), and arginine 160.

This sequence belongs to the methyltransferase superfamily. RNA methyltransferase RsmG family.

The protein resides in the cytoplasm. Functionally, specifically methylates the N7 position of a guanine in 16S rRNA. This is Ribosomal RNA small subunit methyltransferase G from Mycoplasma mobile (strain ATCC 43663 / 163K / NCTC 11711) (Mesomycoplasma mobile).